Consider the following 100-residue polypeptide: Small ribosomal subunit protein uS14c (100 aa).

This sequence belongs to the universal ribosomal protein uS14 family. In terms of assembly, part of the 30S ribosomal subunit.

Its subcellular location is the plastid. It is found in the chloroplast. In terms of biological role, binds 16S rRNA, required for the assembly of 30S particles. The sequence is that of Small ribosomal subunit protein uS14c from Barbarea verna (Land cress).